Here is a 1261-residue protein sequence, read N- to C-terminus: ABC-type transmembrane transporter verA (1261 aa).

Residues 41 to 61 (IGCAFAAVCSGAAMPLMALIL) traverse the membrane as a helical segment. Residues 41-334 (IGCAFAAVCS…LGPNMPSFIK (294 aa)) enclose the ABC transmembrane type-1 1 domain. N-linked (GlcNAc...) asparagine glycosylation occurs at Asn67. 5 helical membrane-spanning segments follow: residues 92-112 (LWFV…SFGF), 166-186 (LGIM…AFSQ), 190-210 (LTLV…FIVS), 270-290 (FVGL…AIGF), and 308-328 (ILSV…LGPN). In terms of domain architecture, ABC transporter 1 spans 374–618 (VELRDMSFAY…GGLYKRLYDA (245 aa)). Asn396 carries N-linked (GlcNAc...) asparagine glycosylation. 409-416 (GPSGAGKS) contributes to the ATP binding site. N-linked (GlcNAc...) asparagine glycosylation is present at Asn463. A run of 6 helical transmembrane segments spans residues 686–706 (YWPI…IFPV), 734–754 (LMFF…GFFM), 808–828 (MGLL…GLAY), 830–850 (WKFA…AGYL), 913–933 (VMTL…ALGF), and 950–970 (FFTV…LFGF). The 286-residue stretch at 691–976 (LIGLVACVVT…LFGFSSNLGK (286 aa)) folds into the ABC transmembrane type-1 2 domain. Residues Asn1007 and Asn1021 are each glycosylated (N-linked (GlcNAc...) asparagine). The 239-residue stretch at 1017–1255 (VDMQNVTFAY…QGNYFKMHES (239 aa)) folds into the ABC transporter 2 domain. 1052 to 1059 (GTSGSGKS) provides a ligand contact to ATP. An N-linked (GlcNAc...) asparagine glycan is attached at Asn1106.

It belongs to the ABC transporter superfamily. ABCB family. Multidrug resistance exporter (TC 3.A.1.201) subfamily.

It is found in the cell membrane. ABC-type transmembrane transporter; part of the gene cluster that mediates the biosynthesis of 11'-deoxyverticillin A, one of the dimeric epipolythiodioxopiperazines (ETPs) from the verticillin family that are toxic secondary metabolites. The verA multidrug transporter is probably involved in the secretion of 11'-deoxyverticillin A. The polypeptide is ABC-type transmembrane transporter verA (Clonostachys rogersoniana).